A 2299-amino-acid chain; its full sequence is MKQEAAKRHPFKSWIFELREILREIKNSHYFLDSWTKFDSVGSFTHIFFHQERFMKLFDPRIWSILLSRDSQGSTSNRYFTTKGVVLLVVAVLIYRINNRNMVERKNIYLMGLLPIPMNSIGPRNDPLEESFGSSNINRLIVSLLYLPKGKKISESCFMDPKESTWVLPITKKCIMPESNWGSRWWRNRVGKKRDSSCKISNETVAGIEISFKEKDIKYLESPFVSYTDDPIRKDHDWELFDRLSPRKKRNIINLNSGQLFEILVKHWICYLMSSFREKRLIEVEGFFKQQGAGSTIQSNDIEHVSHLFSRNKWGISLQNCAQFHMWQFRQDLFVSWEKNPHESDFFRNVSRENWIWLDNVWLVNKDRFFSFFSKVRNVSSNMQYDSTRSIFVQVTDSSQLKGSSDQSRDHFDSISNEDSEYHTLINQREIQQLKERSILWDPSFLQTERTEIESDRFPKCLSGYSSMSRLFTEREKQMKNHLLPEEIEEFLGNPTRSIRSFFSDRWSELHLGSNPTERSTRDQKLLKKQQDVSFVPSRRSENKEMVDIFKIITYLQNTVSIHPISSDPGCDMVPKDEPDMDSSNKISFLNQNDLFHDRNRGGYTLHHDFESEERFQEMADLLTLSITEPDLVYHKGFAFSIDSYGLDQKKFLNEVFNSRDESKKKSLLVLPPIFYEENESFYRRIRKKWVRISCGNALEDPKPKRVVFASNNIMKAVNQYRLIQNLIQIQYSIHGYIRNVSNQFFLMNRPDRNFEYGIQRDQIGNDTLNHRTIMKYTINQHLSNLKKSQKKWFDPLISRTERSMNRDPDAYRYKWSNGSKNFQEHLEHFVSEQKSRFQVVFDRLRINQYSIDWSEVIDKQDLSKSLRFFLSKLLLFLSKLLLFLSKSLPFFFVSIGNIPIHRSEIHIYELKGPNDQLCNQLLESIGVQIVHLNKLKPFLLDDHDTSQKSKLLINGGTISPFLFNKIPKWMIDSFHTRKNRRKSLDNTDSYFSMISHDRDNWLNPVKPFHRSSLISSFYKANRLRFLNNPHHFWFYCNKRFPFYVERARINNYDLTYGQFLNILFIRNKIFSLCVGKKKHVFLERDTPIESQVSNIFIPNDFPPSGDETYNLYKSFHFPIRSAPFVRRALYSIADISGTPLTEGQIVNFERTYCQPLSDMNPSDSEGKNLHQYLNFNSNMGLIHIPCSEKYLPSEKRKKRSLCLKKCVEKRQMYRPFQRDSAFSNFSKWNLFQTYMPWFLTSTGCKYLNFTLLDTFSDLLPILSSSQNFVSIFHDIMHGSDISWPIPQKKLWVILPQWNLISEISSKCLHNLLLSEEMIRRNNESPIPLIWAHLRSPNAREFLYSILFLLLVAGYLVRTHLLFVSRASSELQTEFEKIKSLMIPSYMIELRKLLDGYPTSELNSFWLKNLFLVALKQLGDFLEEIRGSASGGNMLLGGGPAYGVKSIRSKKKYLNINLIDIIDFLSIIPNPINRITFSRNTRHLSRTSKEIYSLIRKRKNVNGDWIDDKIESWVANSDSIDDEEREFLVQFSTLMKEKRIDKILLSLTHSDHLSKNDSGYQMIEQPGSVYLRYLVYIHKKYLMNYEFNRSCLAERRIFLAHYQTITYSQTSCGANSFHFPSHGKPFSLRLALSPSRGILVIGSIGTGRSYLVKYLTTNSYVPFITVFPNKFLDDKPKGYLIDDINIDDSDDIDDSDDIDDDLDIDTELLTMMNALTMDMTPKIDRFYITLQLELAKAMSPCIIWIPNIHDLSVNESNYLSLGLLVNHLSRDCERSSTRNILVIASTHIPQKVDPTLIAPNKSNTCIKIRRLLIPQQRKHFFTLSYTRGFHLEKKMFHTNGFGSITMGSNARDLVALTNEALSISITQKKSIIDTNTIRSALHRQTWDLRSQVRSVQDHGILFYQIGRAVAQNVLLSNCPIDPISIYMKKKSCTEGDSYLYKWYFELGTSMKKLTILLYLLSCSAGSVAQDLWSPPGPDEKNWITSYGFVENDSDLVHGLLEVEDALVGSSRTEKDCSQFDNDRVTLLLRSEPRNPLDMMQNGSCSIVDQRFLYEKYESEFEEGEGEGALDPQQLEEDLFNHIVWAPRIWRPCGNLFDCIESPNELGFPYWARSFRGKRIIDHEHEEDELQENDSEFLQSGTMQYQTRDRSFKEQGFFRISQFIWDPADPFFFLFKDQPFVSVFSRREFFADQEMSKGLLTSQTDPSTSMNKRWFINNTQEKHFELLIHRQRWLRTNSSLSNGSFRSNTPSESYQYLSNLFLSNGTLLDQMTKTLLRKRWLFPDEMKHLIHVTGERFPIP.

1642–1649 lines the ATP pocket; it reads GSIGTGRS.

This sequence belongs to the Ycf2 family.

The protein resides in the plastid. The protein localises to the chloroplast stroma. Probable ATPase of unknown function. Its presence in a non-photosynthetic plant (Epifagus virginiana) and experiments in tobacco indicate that it has an essential function which is probably not related to photosynthesis. The protein is Protein Ycf2 of Nandina domestica (Heavenly bamboo).